The primary structure comprises 168 residues: Nicotinamide-nucleotide adenylyltransferase (168 aa).

Belongs to the archaeal NMN adenylyltransferase family.

The protein resides in the cytoplasm. It carries out the reaction beta-nicotinamide D-ribonucleotide + ATP + H(+) = diphosphate + NAD(+). It functions in the pathway cofactor biosynthesis; NAD(+) biosynthesis; NAD(+) from nicotinamide D-ribonucleotide: step 1/1. The chain is Nicotinamide-nucleotide adenylyltransferase from Methanosphaerula palustris (strain ATCC BAA-1556 / DSM 19958 / E1-9c).